A 419-amino-acid polypeptide reads, in one-letter code: Gamma-glutamyl phosphate reductase (419 aa).

The protein belongs to the gamma-glutamyl phosphate reductase family.

The protein localises to the cytoplasm. The enzyme catalyses L-glutamate 5-semialdehyde + phosphate + NADP(+) = L-glutamyl 5-phosphate + NADPH + H(+). The protein operates within amino-acid biosynthesis; L-proline biosynthesis; L-glutamate 5-semialdehyde from L-glutamate: step 2/2. In terms of biological role, catalyzes the NADPH-dependent reduction of L-glutamate 5-phosphate into L-glutamate 5-semialdehyde and phosphate. The product spontaneously undergoes cyclization to form 1-pyrroline-5-carboxylate. The chain is Gamma-glutamyl phosphate reductase from Azoarcus sp. (strain BH72).